Consider the following 202-residue polypeptide: ATP-dependent Clp protease proteolytic subunit (202 aa).

Residue Ser106 is the Nucleophile of the active site. Residue His131 is part of the active site.

It belongs to the peptidase S14 family. Fourteen ClpP subunits assemble into 2 heptameric rings which stack back to back to give a disk-like structure with a central cavity, resembling the structure of eukaryotic proteasomes.

It localises to the cytoplasm. The enzyme catalyses Hydrolysis of proteins to small peptides in the presence of ATP and magnesium. alpha-casein is the usual test substrate. In the absence of ATP, only oligopeptides shorter than five residues are hydrolyzed (such as succinyl-Leu-Tyr-|-NHMec, and Leu-Tyr-Leu-|-Tyr-Trp, in which cleavage of the -Tyr-|-Leu- and -Tyr-|-Trp bonds also occurs).. In terms of biological role, cleaves peptides in various proteins in a process that requires ATP hydrolysis. Has a chymotrypsin-like activity. Plays a major role in the degradation of misfolded proteins. This is ATP-dependent Clp protease proteolytic subunit from Shewanella baltica (strain OS223).